The following is a 682-amino-acid chain: Tetratricopeptide repeat protein 39B (682 aa).

TPR repeat units lie at residues 393-426 (SLVL…QEEW) and 626-659 (PFTL…YKDY).

This sequence belongs to the TTC39 family.

Its function is as follows. Regulates high density lipoprotein (HDL) cholesterol metabolism by promoting the ubiquitination and degradation of the oxysterols receptors LXR (NR1H2 and NR1H3). This is Tetratricopeptide repeat protein 39B from Homo sapiens (Human).